A 143-amino-acid chain; its full sequence is Large ribosomal subunit protein uL15 (143 aa).

Positions 1 to 48 (MRLNTISPSKGAKHSSKRLGRGIGSGLGKTSGRGHKGQKARSGCSIHR) are disordered. Residues 11 to 20 (GAKHSSKRLG) show a composition bias toward basic residues. The span at 21–31 (RGIGSGLGKTS) shows a compositional bias: gly residues.

This sequence belongs to the universal ribosomal protein uL15 family. Part of the 50S ribosomal subunit.

Its function is as follows. Binds to the 23S rRNA. This is Large ribosomal subunit protein uL15 from Baumannia cicadellinicola subsp. Homalodisca coagulata.